A 215-amino-acid polypeptide reads, in one-letter code: Ion-translocating oxidoreductase complex subunit G (215 aa).

A helical transmembrane segment spans residues 9–29 (GLILSLFAIITSGLIALTYFG). T176 carries the post-translational modification FMN phosphoryl threonine.

The protein belongs to the RnfG family. In terms of assembly, the complex is composed of six subunits: RnfA, RnfB, RnfC, RnfD, RnfE and RnfG. FMN is required as a cofactor.

Its subcellular location is the cell inner membrane. Functionally, part of a membrane-bound complex that couples electron transfer with translocation of ions across the membrane. This Pseudoalteromonas atlantica (strain T6c / ATCC BAA-1087) protein is Ion-translocating oxidoreductase complex subunit G.